We begin with the raw amino-acid sequence, 376 residues long: MKILVDENMPYVEPLFGDLGDIIPVNGRTLTAEQVGEADVLLVRSVTKVNAELLSGNNKLKFVGSATIGTDHVDLTYLAERNIPFSNAPGCNATAVGEFAFIAMLELAQRFNSPLKGKVVGIVGAGNTGTATAKCLQAYGIKVLLNDPIKAAEGDPRSFVSLETIMAQADIISLHVPITRTGEHKTKYLFDEARLKALKPNTWLVNCCRGDVIDNQALIKVKQQRDDLKLVLDVWEGEPTPLPELVPLAEFATPHIAGYSLEGKARGTFMLYQKLCQLLNITADKSLLDLLPTFNIKAVELATAPNEKALLQLARFVYDLRDDDKMFRNTFLNENGFDTMRKNHQHRREFSALALAYDGQSEVDWLSNLGFSGVGQ.

Residues Ser-45 and Thr-67 each contribute to the substrate site. Residue Asp-147 coordinates NAD(+). Arg-209 is a catalytic residue. An NAD(+)-binding site is contributed by Asp-233. Residue Glu-238 is part of the active site. The active-site Proton donor is His-255. Gly-258 lines the NAD(+) pocket. Substrate is bound at residue Tyr-259.

It belongs to the D-isomer specific 2-hydroxyacid dehydrogenase family. PdxB subfamily. As to quaternary structure, homodimer.

The protein resides in the cytoplasm. It catalyses the reaction 4-phospho-D-erythronate + NAD(+) = (R)-3-hydroxy-2-oxo-4-phosphooxybutanoate + NADH + H(+). It participates in cofactor biosynthesis; pyridoxine 5'-phosphate biosynthesis; pyridoxine 5'-phosphate from D-erythrose 4-phosphate: step 2/5. In terms of biological role, catalyzes the oxidation of erythronate-4-phosphate to 3-hydroxy-2-oxo-4-phosphonooxybutanoate. The sequence is that of Erythronate-4-phosphate dehydrogenase from Shewanella baltica (strain OS155 / ATCC BAA-1091).